Here is a 92-residue protein sequence, read N- to C-terminus: Large ribosomal subunit protein uL23c (92 aa).

This sequence belongs to the universal ribosomal protein uL23 family. In terms of assembly, part of the 50S ribosomal subunit.

Its subcellular location is the plastid. It is found in the chloroplast. Its function is as follows. Binds to 23S rRNA. The polypeptide is Large ribosomal subunit protein uL23c (rpl23) (Chara vulgaris (Common stonewort)).